The primary structure comprises 352 residues: Ion-translocating oxidoreductase complex subunit D (352 aa).

Helical transmembrane passes span 20–40, 42–62, 69–91, and 123–143; these read IMLL…WFFG, GTLF…AIVL, VASH…SIPP, and PAMI…TSWL. Residue Thr-187 is modified to FMN phosphoryl threonine. Helical transmembrane passes span 215-235, 242-262, 267-287, 301-321, and 322-342; these read LAGV…VFLL, WHIP…GWLF, LASP…FFIL, LIFG…GGYP, and DGVA…DYYT.

The protein belongs to the NqrB/RnfD family. The complex is composed of six subunits: RsxA, RsxB, RsxC, RsxD, RsxE and RsxG. FMN serves as cofactor.

It localises to the cell inner membrane. In terms of biological role, part of a membrane-bound complex that couples electron transfer with translocation of ions across the membrane. Required to maintain the reduced state of SoxR. The sequence is that of Ion-translocating oxidoreductase complex subunit D from Salmonella paratyphi B (strain ATCC BAA-1250 / SPB7).